A 188-amino-acid chain; its full sequence is Peptidyl-tRNA hydrolase (188 aa).

Position 14 (Tyr-14) interacts with tRNA. His-19 functions as the Proton acceptor in the catalytic mechanism. 3 residues coordinate tRNA: Tyr-64, Asn-66, and Asn-112.

Belongs to the PTH family. As to quaternary structure, monomer.

The protein resides in the cytoplasm. It catalyses the reaction an N-acyl-L-alpha-aminoacyl-tRNA + H2O = an N-acyl-L-amino acid + a tRNA + H(+). Hydrolyzes ribosome-free peptidyl-tRNAs (with 1 or more amino acids incorporated), which drop off the ribosome during protein synthesis, or as a result of ribosome stalling. Its function is as follows. Catalyzes the release of premature peptidyl moieties from peptidyl-tRNA molecules trapped in stalled 50S ribosomal subunits, and thus maintains levels of free tRNAs and 50S ribosomes. The chain is Peptidyl-tRNA hydrolase from Bacillus pumilus (strain SAFR-032).